Reading from the N-terminus, the 252-residue chain is Protein PF0476 (252 aa).

This sequence belongs to the CinA family.

The chain is Protein PF0476 from Pyrococcus furiosus (strain ATCC 43587 / DSM 3638 / JCM 8422 / Vc1).